A 518-amino-acid polypeptide reads, in one-letter code: Arp2/3 complex-activating protein rickA (518 aa).

The tract at residues 310–518 (SAAQLQSAET…ERNAKQSQQR (209 aa)) is disordered. 2 stretches are compositionally biased toward pro residues: residues 344–354 (TPPPAPPPPMP) and 382–401 (VPPP…PPPV). Positions 418–430 (QPRPAVDTTNLMK) are enriched in polar residues. One can recognise a WH2 domain in the interval 424 to 441 (DTTNLMKQIQGGFNLKKI). A compositionally biased stretch (basic and acidic residues) spans 439–461 (KKIEYGEDGKPIPKNKEDTKETS). Over residues 488–498 (GTDSGWASDVS) the composition is skewed to polar residues.

As to quaternary structure, homodimer.

The protein resides in the cell surface. Recruits and activates the Arp2/3 complex, which in turn leads to actin polymerization, promoting Rickettsia motility during infection. The chain is Arp2/3 complex-activating protein rickA (rickA) from Rickettsia bellii (strain RML369-C).